Here is a 505-residue protein sequence, read N- to C-terminus: Catalase (505 aa).

The tract at residues 1-25 (MSQQDKKLTGVFGHPVSDRENSMTA) is disordered. Active-site residues include histidine 56 and asparagine 129. Residue tyrosine 339 coordinates heme.

The protein belongs to the catalase family. In terms of assembly, homodimer. The cofactor is heme.

The catalysed reaction is 2 H2O2 = O2 + 2 H2O. Its function is as follows. Decomposes hydrogen peroxide into water and oxygen; serves to protect cells from the toxic effects of hydrogen peroxide. The protein is Catalase (katA) of Staphylococcus aureus (strain MSSA476).